A 127-amino-acid polypeptide reads, in one-letter code: Large ribosomal subunit protein bL12 (127 aa).

This sequence belongs to the bacterial ribosomal protein bL12 family. In terms of assembly, homodimer. Part of the ribosomal stalk of the 50S ribosomal subunit. Forms a multimeric L10(L12)X complex, where L10 forms an elongated spine to which 2 to 4 L12 dimers bind in a sequential fashion. Binds GTP-bound translation factors.

Functionally, forms part of the ribosomal stalk which helps the ribosome interact with GTP-bound translation factors. Is thus essential for accurate translation. This is Large ribosomal subunit protein bL12 from Acidiphilium cryptum (strain JF-5).